The primary structure comprises 62 residues: Sperm protamine P1 (62 aa).

Positions 1–62 (MARCRRHSRS…RYSRRGRRRY (62 aa)) are disordered.

The protein belongs to the protamine P1 family. Testis.

Its subcellular location is the nucleus. The protein localises to the chromosome. Protamines substitute for histones in the chromatin of sperm during the haploid phase of spermatogenesis. They compact sperm DNA into a highly condensed, stable and inactive complex. In Planigale maculata sinualis (Common planigale), this protein is Sperm protamine P1 (PRM1).